The following is a 60-amino-acid chain: MNAVFIAALLILGTSTFDAMRLWNYCTHILCTNDSDCGQSDSCRCRPPRGDDYRYHCSRY.

The N-terminal stretch at 1–19 (MNAVFIAALLILGTSTFDA) is a signal peptide. The Cell attachment site signature appears at 49–51 (RGD).

This sequence belongs to the ixodegrin family. Contains 3 disulfide bonds. In terms of tissue distribution, expressed in salivary glands.

Its subcellular location is the secreted. In terms of biological role, tick salivary platelet aggregation inhibitor that plays an important part in the anti-hemostatic strategy of ticks. Inhibits platelet aggregation induced by ADP, thrombin and thromboxane A2 (TXA2). Blocks platelet adhesion to soluble collagen (most probably through the binding to alpha-2/beta-1 integrin (ITGA2/ITGB1)) and binds to purified glycoprotein IIb/IIIa (ITGA2B/ITGB3) in a dose-dependent manner. In vivo, reduces thrombus weight effectively in a rat arteriovenous shunt model and inhibits thrombosis in a carrageenan-induced mouse tail thrombosis model. The protein is Ixodegrin-like peptide of Ixodes scapularis (Black-legged tick).